Here is a 120-residue protein sequence, read N- to C-terminus: NAD(P)H-quinone oxidoreductase subunit 3 (120 aa).

3 helical membrane-spanning segments follow: residues 10–30 (LLVF…ASAL), 64–84 (MFAL…PWAV), and 89–109 (LGLL…VGLV).

It belongs to the complex I subunit 3 family. NDH-1 can be composed of about 15 different subunits; different subcomplexes with different compositions have been identified which probably have different functions.

The protein resides in the cellular thylakoid membrane. The catalysed reaction is a plastoquinone + NADH + (n+1) H(+)(in) = a plastoquinol + NAD(+) + n H(+)(out). It catalyses the reaction a plastoquinone + NADPH + (n+1) H(+)(in) = a plastoquinol + NADP(+) + n H(+)(out). In terms of biological role, NDH-1 shuttles electrons from an unknown electron donor, via FMN and iron-sulfur (Fe-S) centers, to quinones in the respiratory and/or the photosynthetic chain. The immediate electron acceptor for the enzyme in this species is believed to be plastoquinone. Couples the redox reaction to proton translocation, and thus conserves the redox energy in a proton gradient. Cyanobacterial NDH-1 also plays a role in inorganic carbon-concentration. The polypeptide is NAD(P)H-quinone oxidoreductase subunit 3 (Synechococcus sp. (strain JA-2-3B'a(2-13)) (Cyanobacteria bacterium Yellowstone B-Prime)).